The sequence spans 984 residues: Probable serine/threonine-protein kinase ireA (984 aa).

A signal peptide spans 1-26 (MTFSKTRNKIIFLLFLIIINIFNINA). The Extracellular portion of the chain corresponds to 27 to 436 (YIKDENEDDL…NDLLDSNKLK (410 aa)). Disordered regions lie at residues 70-91 (YSTS…EITK) and 137-157 (EDKS…DENK). 2 stretches are compositionally biased toward low complexity: residues 82–91 (STSTSTEITK) and 141–150 (STSSTSTTSE). A glycan (N-linked (GlcNAc...) asparagine) is linked at N228. Residues 352–427 (SPPSNNNNNN…GANNNNNNNN (76 aa)) form a disordered region. The segment covering 356–397 (NNNNNNNNNNNNNNNNNNNNNNNNNNNNNNNNNNKNNNNNNK) has biased composition (low complexity). N398 carries an N-linked (GlcNAc...) asparagine glycan. A helical membrane pass occupies residues 437–457 (NYDIYLYSSIVILITSIIVFI). The Cytoplasmic portion of the chain corresponds to 458–984 (RSKKNFNLIN…NDQYFVQYYY (527 aa)). Residues 467-533 (NVNNNNNQNN…NDLIDEFIST (67 aa)) adopt a coiled-coil conformation. The span at 472-489 (NNQNNNQNSNQNNNINNK) shows a compositional bias: low complexity. Residues 472–518 (NNQNNNQNSNQNNNINNKKTPKKKKKKQKNKNNKNNNDEDDENEIEN) are disordered. Residues 490-503 (KTPKKKKKKQKNKN) are compositionally biased toward basic residues. Acidic residues predominate over residues 509-518 (DEDDENEIEN). The Protein kinase domain maps to 575 to 851 (IITNKILGTG…IGECINHPFF (277 aa)). Residues 581–589 (LGTGSCGTI) and K603 each bind ATP. A compositionally biased stretch (polar residues) spans 667–676 (PTDSPSIQSS). The tract at residues 667–692 (PTDSPSIQSSNNNGNGNNGNNNNNNQ) is disordered. Positions 677–691 (NNNGNGNNGNNNNNN) are enriched in low complexity. Catalysis depends on D722, which acts as the Proton acceptor. The KEN domain maps to 854-984 (VHKKLSFLVA…NDQYFVQYYY (131 aa)).

It belongs to the protein kinase superfamily. Ser/Thr protein kinase family.

It localises to the membrane. It catalyses the reaction L-seryl-[protein] + ATP = O-phospho-L-seryl-[protein] + ADP + H(+). The enzyme catalyses L-threonyl-[protein] + ATP = O-phospho-L-threonyl-[protein] + ADP + H(+). The protein is Probable serine/threonine-protein kinase ireA (ireA) of Dictyostelium discoideum (Social amoeba).